The sequence spans 465 residues: Cyclin-A1 (465 aa).

The protein belongs to the cyclin family. Cyclin AB subfamily. As to quaternary structure, interacts with the CDK2 and the CDC2 protein kinases to form a serine/threonine kinase holoenzyme complex. The cyclin subunit imparts substrate specificity to the complex. Does not bind CDK4 and CDK5 (in vitro). The cyclin A1-CDK2 complex interacts with transcription factor E2F-1 and RB proteins. Found in a complex with CDK2, CABLES1 and CCNE1. Interacts with INCA1. Interacts with KLHDC9. Polyubiquitinated via 'Lys-11'-linked ubiquitin by the anaphase-promoting complex (APC/C), leading to its degradation by the proteasome. Deubiquitinated and stabilized by USP37 enables entry into S phase. Ubiquitinated during the G1 phase by the SCF(FBXO31) complex, leading to its proteasomal degradation. Very high levels in testis and very low levels in brain. Also found in myeloid leukemia cell lines.

It is found in the nucleus. Functionally, may be involved in the control of the cell cycle at the G1/S (start) and G2/M (mitosis) transitions. May primarily function in the control of the germline meiotic cell cycle and additionally in the control of mitotic cell cycle in some somatic cells. This chain is Cyclin-A1 (CCNA1), found in Homo sapiens (Human).